Here is a 183-residue protein sequence, read N- to C-terminus: Translation initiation factor IF-3 (183 aa).

Belongs to the IF-3 family. As to quaternary structure, monomer.

It is found in the cytoplasm. Functionally, IF-3 binds to the 30S ribosomal subunit and shifts the equilibrium between 70S ribosomes and their 50S and 30S subunits in favor of the free subunits, thus enhancing the availability of 30S subunits on which protein synthesis initiation begins. The polypeptide is Translation initiation factor IF-3 (Pseudomonas entomophila (strain L48)).